Consider the following 442-residue polypeptide: Cell adhesion molecule 1 (442 aa).

The signal sequence occupies residues 1–44 (MASVVLPSGSQCAAAAAAAAPPGLRLRLLLLLFSAAALIPTGDG). Positions 45–139 (QNLFTKDVTV…PPQESYTTIT (95 aa)) constitute an Ig-like V-type domain. The Extracellular portion of the chain corresponds to 45–374 (QNLFTKDVTV…EEGSIRAVDH (330 aa)). Cys64 and Cys124 are oxidised to a cystine. N-linked (GlcNAc...) asparagine glycosylation is found at Asn67, Asn101, Asn113, and Asn165. 2 consecutive Ig-like C2-type domains span residues 144 to 238 (PRNL…RYLE) and 243 to 329 (PQVH…YMLY). 2 cysteine pairs are disulfide-bonded: Cys166–Cys220 and Cys267–Cys313. N-linked (GlcNAc...) asparagine glycosylation is found at Asn304 and Asn308. The helical transmembrane segment at 375–395 (AVIGGVVAVVVFAMLCLLIIL) threads the bilayer. At 396-442 (GRYFARHKGTYFTHEAKGADDAADADTAIINAEGGQNNSEEKKEYFI) the chain is on the cytoplasmic side. Position 422 is a phosphothreonine (Thr422). Ser434 carries the phosphoserine modification.

This sequence belongs to the nectin family. Homodimer (via Ig-like V-type domain). Interacts with FARP1. Interacts (via Ig-like V-type domain) with CRTAM (via Ig-like V-type domain); the interaction competes with CRTAM homodimerization and CADM1 homodimerization. Interacts (via C-terminus) with EPB41L3/DAL1. The interaction with EPB41L3/DAL1 may act to anchor CADM1 to the actin cytoskeleton. Interacts (via C-terminus) with MPP2 (via PDZ domain). Interacts (via C-terminus) with MPP3 (via PDZ domain); this interaction connects CADM1 with DLG1. Interacts (via C-terminus) with PALS2 (via PDZ domain). As to quaternary structure, (Microbial infection) Interacts with herpes virus 8 proteins vFLIP and vGPCR; these interactions are essential for NF-kappa-B activation. Glycosylation at Asn-67 and Asn-101 promotes adhesive binding and synapse induction.

Its subcellular location is the cell membrane. It localises to the synapse. Mediates homophilic cell-cell adhesion in a Ca(2+)-independent manner. Also mediates heterophilic cell-cell adhesion with CADM3 and NECTIN3 in a Ca(2+)-independent manner. Interaction with CRTAM promotes natural killer (NK) cell cytotoxicity and interferon-gamma (IFN-gamma) secretion by CD8+ cells in vitro as well as NK cell-mediated rejection of tumors expressing CADM1 in vivo. In mast cells, may mediate attachment to and promote communication with nerves. CADM1, together with MITF, is essential for development and survival of mast cells in vivo. By interacting with CRTAM and thus promoting the adhesion between CD8+ T-cells and CD8+ dendritic cells, regulates the retention of activated CD8+ T-cell within the draining lymph node. Required for the intestinal retention of intraepithelial CD4+ CD8+ T-cells and, to a lesser extent, intraepithelial and lamina propria CD8+ T-cells and CD4+ T-cells. Interaction with CRTAM promotes the adhesion to gut-associated CD103+ dendritic cells, which may facilitate the expression of gut-homing and adhesion molecules on T-cells and the conversion of CD4+ T-cells into CD4+ CD8+ T-cells. Acts as a synaptic cell adhesion molecule and plays a role in the formation of dendritic spines and in synapse assembly. May be involved in neuronal migration, axon growth, pathfinding, and fasciculation on the axons of differentiating neurons. May play diverse roles in the spermatogenesis including in the adhesion of spermatocytes and spermatids to Sertoli cells and for their normal differentiation into mature spermatozoa. Acts as a tumor suppressor in non-small-cell lung cancer (NSCLC) cells. May contribute to the less invasive phenotypes of lepidic growth tumor cells. Functionally, (Microbial infection) Induces cell fusion in neuron infected by a neuropathogenic strain of measles. Interacts with measles hemagglutinin to trigger hyperfusogenic F-mediated membrane fusion and presumably transsynaptic cell-to-cell transmission of the virus. The sequence is that of Cell adhesion molecule 1 from Homo sapiens (Human).